Reading from the N-terminus, the 128-residue chain is MAYRKLGRTSSQRKAMLRDLTTDLLINESIVTTEARAKEIRKTVEKMITLGKRGDLHARRQAAAYVRNEIASENYDEASDKYTSTTALQKLFDDIAPRYAERNGGYTRILKTEPRRGDAAPMAIIELV.

This sequence belongs to the bacterial ribosomal protein bL17 family. In terms of assembly, part of the 50S ribosomal subunit. Contacts protein L32.

The protein is Large ribosomal subunit protein bL17 of Streptococcus agalactiae serotype Ia (strain ATCC 27591 / A909 / CDC SS700).